Here is a 696-residue protein sequence, read N- to C-terminus: Probable glutamine--fructose-6-phosphate aminotransferase [isomerizing] (696 aa).

Residue Cys2 is the For GATase activity of the active site. Positions 2 to 303 (CGIFGYINYL…DDDIAHVRDG (302 aa)) constitute a Glutamine amidotransferase type-2 domain. SIS domains follow at residues 375–514 (YYDI…DSVS) and 547–686 (AIEQ…VDQP).

It carries out the reaction D-fructose 6-phosphate + L-glutamine = D-glucosamine 6-phosphate + L-glutamate. Its pathway is nucleotide-sugar biosynthesis; UDP-N-acetyl-alpha-D-glucosamine biosynthesis; alpha-D-glucosamine 6-phosphate from D-fructose 6-phosphate: step 1/1. Involved in amino sugar synthesis (formation of chitin, supplies the amino sugars of asparagine-linked oligosaccharides of glycoproteins). This Schizosaccharomyces pombe (strain 972 / ATCC 24843) (Fission yeast) protein is Probable glutamine--fructose-6-phosphate aminotransferase [isomerizing].